The primary structure comprises 132 residues: uncharacterized protein (132 aa).

This is an uncharacterized protein from Methanocaldococcus jannaschii (strain ATCC 43067 / DSM 2661 / JAL-1 / JCM 10045 / NBRC 100440) (Methanococcus jannaschii).